We begin with the raw amino-acid sequence, 154 residues long: uncharacterized protein (154 aa).

This is an uncharacterized protein from Saccharomyces cerevisiae (strain ATCC 204508 / S288c) (Baker's yeast).